Reading from the N-terminus, the 142-residue chain is Nucleoside diphosphate kinase (142 aa).

6 residues coordinate ATP: Lys11, Phe59, Arg87, Thr93, Arg104, and Asn114. His117 acts as the Pros-phosphohistidine intermediate in catalysis.

This sequence belongs to the NDK family. Homotetramer. It depends on Mg(2+) as a cofactor.

Its subcellular location is the cytoplasm. It carries out the reaction a 2'-deoxyribonucleoside 5'-diphosphate + ATP = a 2'-deoxyribonucleoside 5'-triphosphate + ADP. The enzyme catalyses a ribonucleoside 5'-diphosphate + ATP = a ribonucleoside 5'-triphosphate + ADP. Major role in the synthesis of nucleoside triphosphates other than ATP. The ATP gamma phosphate is transferred to the NDP beta phosphate via a ping-pong mechanism, using a phosphorylated active-site intermediate. The polypeptide is Nucleoside diphosphate kinase (Wigglesworthia glossinidia brevipalpis).